Reading from the N-terminus, the 86-residue chain is DNA-directed RNA polymerase subunit Rpo6 (86 aa).

Belongs to the archaeal Rpo6/eukaryotic RPB6 RNA polymerase subunit family. Part of the RNA polymerase complex.

The protein resides in the cytoplasm. It catalyses the reaction RNA(n) + a ribonucleoside 5'-triphosphate = RNA(n+1) + diphosphate. Its function is as follows. DNA-dependent RNA polymerase (RNAP) catalyzes the transcription of DNA into RNA using the four ribonucleoside triphosphates as substrates. This Sulfurisphaera tokodaii (strain DSM 16993 / JCM 10545 / NBRC 100140 / 7) (Sulfolobus tokodaii) protein is DNA-directed RNA polymerase subunit Rpo6.